A 750-amino-acid chain; its full sequence is Photosystem I P700 chlorophyll a apoprotein A1 (750 aa).

A run of 8 helical transmembrane segments spans residues 70-93, 156-179, 195-219, 291-309, 346-369, 385-411, 433-455, and 531-549; these read VFSA…FHGA, LYCT…FHYH, LNHH…HVSL, TAHH…GHMY, WHAQ…HHMY, LSLF…IFMV, AIIS…LYIH, and FLVH…LILL. [4Fe-4S] cluster is bound by residues cysteine 573 and cysteine 582. 2 consecutive transmembrane segments (helical) span residues 589-610 and 664-686; these read HVFL…HFSW and LSAY…MFLF. A chlorophyll a'-binding site is contributed by histidine 675. Residues methionine 683 and tyrosine 691 each coordinate chlorophyll a. Position 692 (tryptophan 692) interacts with phylloquinone. A helical membrane pass occupies residues 724 to 744; it reads AVGVTHYLLGGIATTWAFFLA.

It belongs to the PsaA/PsaB family. As to quaternary structure, the PsaA/B heterodimer binds the P700 chlorophyll special pair and subsequent electron acceptors. PSI consists of a core antenna complex that captures photons, and an electron transfer chain that converts photonic excitation into a charge separation. The eukaryotic PSI reaction center is composed of at least 11 subunits. It depends on P700 is a chlorophyll a/chlorophyll a' dimer, A0 is one or more chlorophyll a, A1 is one or both phylloquinones and FX is a shared 4Fe-4S iron-sulfur center. as a cofactor.

It localises to the plastid. It is found in the chloroplast thylakoid membrane. The catalysed reaction is reduced [plastocyanin] + hnu + oxidized [2Fe-2S]-[ferredoxin] = oxidized [plastocyanin] + reduced [2Fe-2S]-[ferredoxin]. In terms of biological role, psaA and PsaB bind P700, the primary electron donor of photosystem I (PSI), as well as the electron acceptors A0, A1 and FX. PSI is a plastocyanin-ferredoxin oxidoreductase, converting photonic excitation into a charge separation, which transfers an electron from the donor P700 chlorophyll pair to the spectroscopically characterized acceptors A0, A1, FX, FA and FB in turn. Oxidized P700 is reduced on the lumenal side of the thylakoid membrane by plastocyanin. The chain is Photosystem I P700 chlorophyll a apoprotein A1 from Helianthus annuus (Common sunflower).